We begin with the raw amino-acid sequence, 280 residues long: Lysosome-associated membrane glycoprotein 5 (280 aa).

The first 29 residues, 1 to 29 (MDLRRRALLGVDGLRVLLMLFHTVTRIMA), serve as a signal peptide directing secretion. Residues 30-235 (EQEVENLSGL…PVDEREQLEE (206 aa)) are Extracellular-facing. N-linked (GlcNAc...) asparagine glycans are attached at residues Asn35 and Asn53. The helical transmembrane segment at 236 to 256 (TLPLILGLILGLVIVVTLVIY) threads the bilayer. The Cytoplasmic segment spans residues 257–280 (HIHHKMTANQVQIPRDRSQYKHMG).

It belongs to the LAMP family. Glycosylated.

It localises to the cytoplasmic vesicle membrane. The protein localises to the cell membrane. It is found in the cell projection. The protein resides in the dendrite. Its subcellular location is the cytoplasmic vesicle. It localises to the secretory vesicle. The protein localises to the synaptic vesicle membrane. It is found in the growth cone membrane. The protein resides in the early endosome membrane. Its subcellular location is the recycling endosome. It localises to the endoplasmic reticulum-Golgi intermediate compartment membrane. The protein localises to the endosome membrane. Its function is as follows. Plays a role in short-term synaptic plasticity in a subset of GABAergic neurons in the brain. This chain is Lysosome-associated membrane glycoprotein 5 (LAMP5), found in Bos taurus (Bovine).